The primary structure comprises 734 residues: Paralemmin-3 (734 aa).

The stretch at Ser-19 to Arg-64 forms a coiled coil. Disordered regions lie at residues Arg-62–Glu-100 and Gln-114–Ser-217. Residues Gly-73–Ser-82 show a composition bias toward basic and acidic residues. A coiled-coil region spans residues Gly-90 to Ala-116. 5 positions are modified to phosphoserine: Ser-139, Ser-158, Ser-167, Ser-170, and Ser-172. The segment covering Arg-186–Ala-198 has biased composition (polar residues). Ser-270 bears the Phosphoserine mark. Residues Asp-297–Ala-308 are compositionally biased toward basic and acidic residues. 3 disordered regions span residues Asp-297 to Glu-347, Pro-374 to Val-400, and Glu-413 to Ala-709. Thr-311 is subject to Phosphothreonine. Residues Arg-315–Leu-336 show a composition bias toward basic and acidic residues. Residues Ser-332 and Ser-335 each carry the phosphoserine modification. Composition is skewed to basic and acidic residues over residues Glu-413 to Gly-427, Thr-435 to Glu-452, Asp-462 to Glu-484, Leu-494 to Thr-531, Ile-540 to Gly-561, Glu-571 to Asp-582, Glu-589 to Lys-607, and Asp-630 to Gly-647. A Phosphoserine modification is found at Ser-451. At Ser-601 the chain carries Phosphoserine. Position 721 is a phosphoserine (Ser-721). S-palmitoyl cysteine attachment occurs at residues Cys-728 and Cys-730. At Cys-731 the chain carries Cysteine methyl ester. Cys-731 carries S-farnesyl cysteine lipidation. Positions Val-732–Met-734 are cleaved as a propeptide — removed in mature form.

It belongs to the paralemmin family. As to quaternary structure, interacts with SIGIRR. Post-translationally, palmitoylated on Cys-728 and Cys-730 and prenylated on Cys-731; which is required for membrane association.

The protein localises to the cytoplasm. It is found in the cell membrane. ATP-binding protein, which may act as a adapter in the Toll-like receptor (TLR) signaling. The chain is Paralemmin-3 (Palm3) from Mus musculus (Mouse).